A 359-amino-acid polypeptide reads, in one-letter code: Histidinol-phosphate aminotransferase (359 aa).

The residue at position 217 (lysine 217) is an N6-(pyridoxal phosphate)lysine.

Belongs to the class-II pyridoxal-phosphate-dependent aminotransferase family. Histidinol-phosphate aminotransferase subfamily. Homodimer. Pyridoxal 5'-phosphate is required as a cofactor.

The enzyme catalyses L-histidinol phosphate + 2-oxoglutarate = 3-(imidazol-4-yl)-2-oxopropyl phosphate + L-glutamate. It participates in amino-acid biosynthesis; L-histidine biosynthesis; L-histidine from 5-phospho-alpha-D-ribose 1-diphosphate: step 7/9. The protein is Histidinol-phosphate aminotransferase of Salmonella newport (strain SL254).